Reading from the N-terminus, the 1205-residue chain is Nitric oxide synthase 3 (1205 aa).

Disordered regions lie at residues 1–20 (MGNLKSVGQEPGPPCGLGLG) and 26–73 (CGKQ…FPRV). The segment covering 33–47 (SPAPEPSWAPAPATP) has biased composition (pro residues). Residues C96 and C101 each contribute to the Zn(2+) site. The interaction with NOSIP stretch occupies residues 100–489 (RCLGSLVLPR…PDPWKGSAAK (390 aa)). S104 lines the (6R)-L-erythro-5,6,7,8-tetrahydrobiopterin pocket. S116 is modified (phosphoserine). C186 provides a ligand contact to heme b. Residues Q250, W359, Y360, and E364 each contribute to the L-arginine site. Residue R368 participates in (6R)-L-erythro-5,6,7,8-tetrahydrobiopterin binding. N369 is an L-arginine binding site. Residues A449, W450, and F463 each coordinate (6R)-L-erythro-5,6,7,8-tetrahydrobiopterin. Position 478 (Y478) interacts with heme b. T498 carries the post-translational modification Phosphothreonine. Residues S529, E530, T531, R533, S575, and T576 each coordinate FMN. Residues S618, S636, and S641 each carry the phosphoserine modification. FMN-binding residues include S657, C664, E690, and Q694. R781 contacts NADP(+). A disordered region spans residues 796–850 (LQYQPGDHISPHPPPRSSHRPGQGGPRVAPFSERPLMPRTPPPGGPPPSWVRDPR). Residue H803 coordinates FAD. The segment covering 833–844 (PRTPPPGGPPPS) has biased composition (pro residues). 5 residues coordinate FAD: R939, Y941, S942, T957, and A959. Residues T1018, R1051, S1080, R1081, K1087, Y1089, and Q1091 each contribute to the NADP(+) site. The residue at position 1177 (T1177) is a Phosphothreonine. A phosphoserine mark is found at S1179 and S1181.

This sequence belongs to the NOS family. As to quaternary structure, homodimer. Interacts with NOSIP and NOSTRIN. Interacts with HSP90AB1. Forms a complex with ASL, ASS1 and SLC7A1; the complex regulates cell-autonomous L-arginine synthesis and citrulline recycling while channeling extracellular L-arginine to nitric oxide synthesis pathway. The cofactor is heme b. Requires FAD as cofactor. FMN serves as cofactor. It depends on (6R)-L-erythro-5,6,7,8-tetrahydrobiopterin as a cofactor.

The protein resides in the membrane. Its subcellular location is the caveola. It localises to the cytoplasm. The protein localises to the cytoskeleton. It is found in the golgi apparatus. The protein resides in the cell membrane. The enzyme catalyses 2 L-arginine + 3 NADPH + 4 O2 + H(+) = 2 L-citrulline + 2 nitric oxide + 3 NADP(+) + 4 H2O. Its activity is regulated as follows. Stimulated by calcium/calmodulin. Inhibited by NOSIP and NOSTRIN. Its function is as follows. Produces nitric oxide (NO) which is implicated in vascular smooth muscle relaxation through a cGMP-mediated signal transduction pathway. NO mediates vascular endothelial growth factor (VEGF)-induced angiogenesis in coronary vessels and promotes blood clotting through the activation of platelets. The protein is Nitric oxide synthase 3 (NOS3) of Ovis aries (Sheep).